Here is a 172-residue protein sequence, read N- to C-terminus: L-methionine sulfoximine/L-methionine sulfone acetyltransferase (172 aa).

An N-acetyltransferase domain is found at 3 to 166 (ASIRDAGVAD…DLTFMQLNLD (164 aa)). Residues 75-77 (RPF) and 85-87 (EHS) each bind substrate. Acetyl-CoA contacts are provided by residues 88–90 (VYV), 96–101 (GKGLGV), and Asn127.

In terms of assembly, homodimer.

It carries out the reaction L-methionine sulfoximine + acetyl-CoA = N-acetyl-L-methionine sulfoximine + CoA + H(+). It catalyses the reaction L-methionine sulfone + acetyl-CoA = N-acetyl-L-methionine sulfone + CoA + H(+). Its function is as follows. Plays a role in the resistance against the toxic effects of L-methionine sulfoximine (MSX), a rare amino acid, which inhibits glutamine synthetase (GlnA). Catalyzes the acetylation of L-methionine sulfoximine (MSX). This is L-methionine sulfoximine/L-methionine sulfone acetyltransferase from Pseudomonas aeruginosa (strain ATCC 15692 / DSM 22644 / CIP 104116 / JCM 14847 / LMG 12228 / 1C / PRS 101 / PAO1).